The following is a 429-amino-acid chain: Adenylosuccinate synthetase (429 aa).

Residues 12–18 (GDEGKGK) and 40–42 (GHT) each bind GTP. Residue Asp-13 is the Proton acceptor of the active site. Mg(2+) is bound by residues Asp-13 and Gly-40. IMP-binding positions include 13-16 (DEGK), 38-41 (NAGH), Thr-128, Arg-142, Gln-223, Thr-238, and Arg-302. His-41 serves as the catalytic Proton donor. Residue 298 to 304 (TTTGRAR) coordinates substrate. GTP is bound by residues Arg-304, 330–332 (SID), and 412–414 (SVG).

It belongs to the adenylosuccinate synthetase family. As to quaternary structure, homodimer. Mg(2+) serves as cofactor.

It localises to the cytoplasm. It catalyses the reaction IMP + L-aspartate + GTP = N(6)-(1,2-dicarboxyethyl)-AMP + GDP + phosphate + 2 H(+). The protein operates within purine metabolism; AMP biosynthesis via de novo pathway; AMP from IMP: step 1/2. Its function is as follows. Plays an important role in the de novo pathway of purine nucleotide biosynthesis. Catalyzes the first committed step in the biosynthesis of AMP from IMP. The polypeptide is Adenylosuccinate synthetase (Oceanobacillus iheyensis (strain DSM 14371 / CIP 107618 / JCM 11309 / KCTC 3954 / HTE831)).